A 210-amino-acid polypeptide reads, in one-letter code: Large ribosomal subunit protein uL3 (210 aa).

It belongs to the universal ribosomal protein uL3 family. As to quaternary structure, part of the 50S ribosomal subunit. Forms a cluster with proteins L14 and L19.

One of the primary rRNA binding proteins, it binds directly near the 3'-end of the 23S rRNA, where it nucleates assembly of the 50S subunit. The sequence is that of Large ribosomal subunit protein uL3 from Solibacter usitatus (strain Ellin6076).